Consider the following 111-residue polypeptide: CRIB domain-containing protein RIC2 (111 aa).

In terms of domain architecture, CRIB spans 71-84 (IGFPTDVKHLSHIG).

Interacts with ARAC11/ROP1. In terms of tissue distribution, expressed in roots, leaves, stems, flowers, siliques and pollen.

It localises to the cell membrane. In terms of biological role, functions as a downstream effector of Rho-related GTP binding proteins of the 'Rho of Plants' (ROPs) family. Participates in the propagation of ROP GTPase signals in specific cellular responses. Is involved in pollen tube growth regulation through its interaction with ARAC11/ROP1. This Arabidopsis thaliana (Mouse-ear cress) protein is CRIB domain-containing protein RIC2 (RIC2).